The chain runs to 382 residues: Anhydro-N-acetylmuramic acid kinase (382 aa).

Residue 9–16 (GTSLDGID) coordinates ATP.

The protein belongs to the anhydro-N-acetylmuramic acid kinase family.

The catalysed reaction is 1,6-anhydro-N-acetyl-beta-muramate + ATP + H2O = N-acetyl-D-muramate 6-phosphate + ADP + H(+). Its pathway is amino-sugar metabolism; 1,6-anhydro-N-acetylmuramate degradation. The protein operates within cell wall biogenesis; peptidoglycan recycling. In terms of biological role, catalyzes the specific phosphorylation of 1,6-anhydro-N-acetylmuramic acid (anhMurNAc) with the simultaneous cleavage of the 1,6-anhydro ring, generating MurNAc-6-P. Is required for the utilization of anhMurNAc either imported from the medium or derived from its own cell wall murein, and thus plays a role in cell wall recycling. This chain is Anhydro-N-acetylmuramic acid kinase, found in Bacillus anthracis (strain A0248).